A 725-amino-acid polypeptide reads, in one-letter code: Catalase-peroxidase 1 (725 aa).

The tryptophyl-tyrosyl-methioninium (Trp-Tyr) (with M-250) cross-link spans 96–224 (WHSAGSYRLA…LAAVQMGLIY (129 aa)). His97 serves as the catalytic Proton acceptor. Residues 224–250 (YVNPEGVDGNPDPLRTAKDVRETFKRM) constitute a cross-link (tryptophyl-tyrosyl-methioninium (Tyr-Met) (with W-96)). His265 contacts heme b.

The protein belongs to the peroxidase family. Peroxidase/catalase subfamily. As to quaternary structure, homodimer or homotetramer. Heme b serves as cofactor. Post-translationally, formation of the three residue Trp-Tyr-Met cross-link is important for the catalase, but not the peroxidase activity of the enzyme.

The enzyme catalyses H2O2 + AH2 = A + 2 H2O. It carries out the reaction 2 H2O2 = O2 + 2 H2O. Bifunctional enzyme with both catalase and broad-spectrum peroxidase activity. This Idiomarina loihiensis (strain ATCC BAA-735 / DSM 15497 / L2-TR) protein is Catalase-peroxidase 1.